Consider the following 264-residue polypeptide: Transformer-2 sex-determining protein (264 aa).

The interval 1 to 96 (MDREPLSSGR…HKSREHPQAS (96 aa)) is disordered. The span at 13-22 (CSARYKHKRS) shows a compositional bias: basic residues. Residues 23-33 (ASSSSAGTTSS) are compositionally biased toward low complexity. At Ser-40 the chain carries Phosphoserine. Over residues 47–61 (SRRHQRSSSRRRSRS) the composition is skewed to basic residues. Positions 71 to 85 (EPRHRSGRSSRDRER) are enriched in basic and acidic residues. Positions 97 to 175 (RCIGVFGLNT…RRIRVDFSIT (79 aa)) constitute an RRM domain. The tract at residues 176–196 (QRAHTPTPGVYLGRQPRGKAP) is linker. Positions 179–264 (HTPTPGVYLG…PQLRRTSSRY (86 aa)) are disordered. Thr-180 carries the post-translational modification Phosphothreonine. The span at 191 to 206 (PRGKAPRSFSPRRGRR) shows a compositional bias: basic residues. Basic and acidic residues predominate over residues 207-234 (VYHDRSASPYDNYRDRYDYRNDRYDRNL). Phosphoserine is present on residues Ser-212 and Ser-214. Over residues 235–250 (RRSPSRNRYTRNRSYS) the composition is skewed to basic residues. Ser-254 bears the Phosphoserine mark.

It belongs to the splicing factor SR family. In terms of processing, extensively phosphorylated on serine residues in the RS domain. As to expression, isoform Tmaj and isoform Tmin are expressed in males and females. Isoform msTmaj and isoform msTmin are present only in male germ cells.

In terms of biological role, required for female sex determination in somatic cells and for spermatogenesis in male germ cells. Positive regulator of female-specific splicing and/or polyadenylation of doublesex (dsx) pre-mRNA. Splicing requires an enhancer complex, dsxRE (dsx repeat element: which contains six copies of a 13-nucleotide repeat and a purine-rich enhancer (PRE)). DsxRE is formed through cooperative interactions between tra, tra2 and the sr proteins, and these interactions require both the repeat sequences and PRE. PRE is required for specific binding of tra2 to the dsxRE. Protein-RNA and protein-protein interactions are involved in tra-2 dependent activation and repression of alternative splicing. Together with tra-2, plays a role in switching fru splicing from the male-specific pattern to the female-specific pattern through activation of the female-specific fru 5'-splice site. This Drosophila melanogaster (Fruit fly) protein is Transformer-2 sex-determining protein (tra2).